Consider the following 9904-residue polypeptide: Extracellular matrix-binding protein ebh (9904 aa).

The first 39 residues, 1-39, serve as a signal peptide directing secretion; sequence MNYRDKIQKFSIRKYTVGTFSTVIATLVFLGFNTSQAHA. Residues 41-59 show a composition bias toward polar residues; that stretch reads ETNQPASVVKQKQQSNNEQ. 2 disordered regions span residues 41 to 153 and 250 to 277; these read ETNQ…NDNR and PQRQ…PRSV. Residues 65–78 are compositionally biased toward low complexity; it reads SQVQNSQNSQNSQS. Residues 79–117 show a composition bias toward polar residues; it reads LSATHENEQPNISQANLVDQKVAQSSTTNDEQPASQNVN. The span at 130-140 shows a compositional bias: basic and acidic residues; sequence PDKEEGKHKQN. Polar residues-rich tracts occupy residues 141 to 151 and 250 to 266; these read ESQSANKNGND and PQRQ…QTRS. FIVAR domains follow at residues 2524 to 2580, 2610 to 2666, 2687 to 2750, 2780 to 2836, 2864 to 2919, 2947 to 3002, 3030 to 3085, 3154 to 3212, 3280 to 3339, 3407 to 3465, 3533 to 3591, 3659 to 3717, 3785 to 3843, 3911 to 3969, 4037 to 4095, 4160 to 4208, 4276 to 4334, 4402 to 4460, 4528 to 4586, 4654 to 4712, 4780 to 4838, 4906 to 4964, 5032 to 5090, 5158 to 5216, 5284 to 5342, 5410 to 5468, 5536 to 5593, 5661 to 5719, 5787 to 5845, 5913 to 5971, 6039 to 6097, 6175 to 6223, 6291 to 6349, 6417 to 6475, 6543 to 6601, 6669 to 6727, 6795 to 6853, 6921 to 6979, 7047 to 7105, 7173 to 7231, 7299 to 7357, 7425 to 7486, 7551 to 7609, 7677 to 7735, 7803 to 7860, 7928 to 7986, 8054 to 8112, 8180 to 8238, 8306 to 8364, 8432 to 8490, 8558 to 8612, 8680 to 8739, and 8934 to 8990; these read AKNH…VSDA, SKNN…ISEE, DTHT…VQTA, AKTK…IAEE, AKTQ…IRQN, AKNQ…INTN, AKTQ…INDK, AMTK…VNQK, AMTG…VNNA, AMGN…VNRA, AMGN…VTEA, AMNT…ITQK, AMAS…VEAA, AMGN…VEQA, AMGT…VTAA, DKDA…VDNA, AMGA…INGM, AMTA…VNSA, AMKG…ITQA, AMHS…VEQA, AMGQ…VERA, AMTA…VTNA, AMKG…INQA, AMTN…VESA, AMSN…VEQA, AMNQ…INQK, AMGN…VQAA, AMGQ…VEAA, AMQR…VEQA, AMDQ…VTAA, AMNQ…VTQA, DKDQ…VEAA, AMGN…VEAA, AMDK…INQA, AMTQ…ITAA, AMTQ…IQQA, AMTN…VEQA, AMTQ…VAQA, AMGT…VTQA, AMGN…ITRA, AMDQ…ITNE, AMEL…VNGA, AMHG…INQA, LMDA…VSSA, AIKA…IDQA, AMEA…VEQL, AMQA…VEQL, AMET…VEQA, SMDQ…VDQA, AMDQ…VIKL, and AMET…INGA. A helical transmembrane segment spans residues 9710 to 9730; that stretch reads IKNAIGVVGISGLLASFWFFI. Residues 9807-9904 form a disordered region; the sequence is RRKEDEEDVE…KKKKSKKNKK (98 aa). Composition is skewed to basic and acidic residues over residues 9822-9832 and 9871-9881; these read TDEKVLKDNEH and QKDNQSKDKKS. The segment covering 9886–9904 has biased composition (basic residues); the sequence is TSKKVAAKKKKKKSKKNKK.

The protein resides in the cell membrane. The protein is Extracellular matrix-binding protein ebh (ebh) of Staphylococcus aureus (strain MW2).